The chain runs to 238 residues: MATLGVNIDHIANVRQARKTVEPDPVQFAFLAELGGADSITVHLREDRRHIQDRDLFLLKETIKTKLNLEMAATEEMLEIAKKILPDYVTLVPEKREEVTTEGGLDLKSNVQYLKKAVGNLQDSNIEVSAFIDPLGEQINYSKEIGFDFIELHTGKYAKLSGSDQYKELQRIIESTYLANDLGLVVNAGHGLNYNNVKKIASINNMNELNIGHSIVARALAIGLEKSVREMKSLITSN.

N7 contributes to the 3-amino-2-oxopropyl phosphate binding site. Residue D9–H10 participates in 1-deoxy-D-xylulose 5-phosphate binding. Position 18 (R18) interacts with 3-amino-2-oxopropyl phosphate. The active-site Proton acceptor is the H43. Residues R45 and H50 each coordinate 1-deoxy-D-xylulose 5-phosphate. The active-site Proton acceptor is the E70. T100 serves as a coordination point for 1-deoxy-D-xylulose 5-phosphate. H190 (proton donor) is an active-site residue. Residues G191 and G212–H213 each bind 3-amino-2-oxopropyl phosphate.

This sequence belongs to the PNP synthase family. Homooctamer; tetramer of dimers.

The protein localises to the cytoplasm. It carries out the reaction 3-amino-2-oxopropyl phosphate + 1-deoxy-D-xylulose 5-phosphate = pyridoxine 5'-phosphate + phosphate + 2 H2O + H(+). The protein operates within cofactor biosynthesis; pyridoxine 5'-phosphate biosynthesis; pyridoxine 5'-phosphate from D-erythrose 4-phosphate: step 5/5. Functionally, catalyzes the complicated ring closure reaction between the two acyclic compounds 1-deoxy-D-xylulose-5-phosphate (DXP) and 3-amino-2-oxopropyl phosphate (1-amino-acetone-3-phosphate or AAP) to form pyridoxine 5'-phosphate (PNP) and inorganic phosphate. This is Pyridoxine 5'-phosphate synthase from Prochlorococcus marinus (strain MIT 9215).